We begin with the raw amino-acid sequence, 732 residues long: MPSAKSPRRKAPEPIDLDNPQYYFNRSLSWLEFNKRVLHEAYDPRTPLLERLKFMAIFSSNLDEFFMVRVAGLKQQVESGILQVGADGMPPAEQLQAVRQYLLPIVTEQHRYFDQELRALLAKESIFLTRFNELTPEQQAYLNDYFQAQVFPVLTPLAVDPAHPFPYISSLSLNLAVLIRDPESGQERLARVKVPNQFPRFVALPQHLHSPQGVHWLGVPLEEIIAHNLSALFPGMEIEAYFAFRITRSADLELETDKADDLLIAIEQEIRKRRFGSVVRLEVQRGIPPLLRQTLMEEMDLEEIDVYELEGLLCLNDLFAFMGLPLPQFKDPEWQPQVPPSFQRVEERESMFDTSSEITTLGTDYWEAVANELFSLIREGDIIVHHPYHSFAATVQRFITLAAHDPQVLAIKITLYRTSGDSPIVSALIKAAENGKQVAVLVELKARFDEENNILWARKLEKVGVHVVYGVPGLKTHTKTVLVVRQEAGQIRRYVHIGTGNYNPKTASLYEDLGLFSCREELGADLSELFNVLTGYARQRDYRKLLVAPVTMRDRTLQLIYREIEHARNGQPARIIAKMNAITDTQVIRALYEASQAGVDIDLIIRGMCCLRPGVPGVSDRIRVISIIGRFLEHSRIFYFGNNGDPEYYIGSADWRSRNLDRRVEAITPIEDPAIQLELKERLEIMLADNRQAWELQPDGTYRQRQPAPGEAERGTHSVLMARTLKDVQGSH.

Residue N61 coordinates ATP. Residues R417 and R447 each coordinate Mg(2+). The Phosphohistidine intermediate role is filled by H477. The ATP site is built by Y510, R606, and H634. A disordered region spans residues 699–718 (DGTYRQRQPAPGEAERGTHS).

It belongs to the polyphosphate kinase 1 (PPK1) family. It depends on Mg(2+) as a cofactor. An intermediate of this reaction is the autophosphorylated ppk in which a phosphate is covalently linked to a histidine residue through a N-P bond.

The enzyme catalyses [phosphate](n) + ATP = [phosphate](n+1) + ADP. Its function is as follows. Catalyzes the reversible transfer of the terminal phosphate of ATP to form a long-chain polyphosphate (polyP). This is Polyphosphate kinase from Thermosynechococcus vestitus (strain NIES-2133 / IAM M-273 / BP-1).